Reading from the N-terminus, the 355-residue chain is 3-dehydroquinate synthase (355 aa).

NAD(+) is bound by residues 71-76 (EGEASK), 105-109 (GVVGD), 129-130 (TS), lysine 142, and lysine 151. Zn(2+) is bound by residues glutamate 184, histidine 246, and histidine 263.

It belongs to the sugar phosphate cyclases superfamily. Dehydroquinate synthase family. Co(2+) is required as a cofactor. The cofactor is Zn(2+). Requires NAD(+) as cofactor.

It is found in the cytoplasm. The catalysed reaction is 7-phospho-2-dehydro-3-deoxy-D-arabino-heptonate = 3-dehydroquinate + phosphate. The protein operates within metabolic intermediate biosynthesis; chorismate biosynthesis; chorismate from D-erythrose 4-phosphate and phosphoenolpyruvate: step 2/7. Catalyzes the conversion of 3-deoxy-D-arabino-heptulosonate 7-phosphate (DAHP) to dehydroquinate (DHQ). This Streptococcus sanguinis (strain SK36) protein is 3-dehydroquinate synthase.